Here is a 199-residue protein sequence, read N- to C-terminus: Outer-membrane lipoprotein LolB (199 aa).

A signal peptide spans 1–28 (MAAAGSLCQTAWRVRGWLAAGLCALLAG). Cysteine 29 carries the N-palmitoyl cysteine lipid modification. Cysteine 29 is lipidated: S-diacylglycerol cysteine.

This sequence belongs to the LolB family. In terms of assembly, monomer.

The protein resides in the cell outer membrane. Plays a critical role in the incorporation of lipoproteins in the outer membrane after they are released by the LolA protein. The chain is Outer-membrane lipoprotein LolB from Bordetella petrii (strain ATCC BAA-461 / DSM 12804 / CCUG 43448).